The sequence spans 252 residues: Chitooligosaccharide deacetylase (252 aa).

Residues histidine 61 and histidine 125 each coordinate Mg(2+).

It belongs to the YdjC deacetylase family. ChbG subfamily. Homodimer. The cofactor is Mg(2+).

The protein localises to the cytoplasm. It catalyses the reaction N,N'-diacetylchitobiose + H2O = N-acetyl-beta-D-glucosaminyl-(1-&gt;4)-D-glucosamine + acetate. It carries out the reaction diacetylchitobiose-6'-phosphate + H2O = N'-monoacetylchitobiose-6'-phosphate + acetate. It participates in glycan degradation; chitin degradation. Its function is as follows. Involved in the degradation of chitin. ChbG is essential for growth on the acetylated chitooligosaccharides chitobiose and chitotriose but is dispensable for growth on cellobiose and chitosan dimer, the deacetylated form of chitobiose. Deacetylation of chitobiose-6-P and chitotriose-6-P is necessary for both the activation of the chb promoter by the regulatory protein ChbR and the hydrolysis of phosphorylated beta-glucosides by the phospho-beta-glucosidase ChbF. Catalyzes the removal of only one acetyl group from chitobiose-6-P to yield monoacetylchitobiose-6-P, the inducer of ChbR and the substrate of ChbF. This chain is Chitooligosaccharide deacetylase, found in Escherichia coli (strain 55989 / EAEC).